Consider the following 213-residue polypeptide: Ephrin-A2 (213 aa).

The signal sequence occupies residues 1-24 (MAPAQRPLLPLLLLLLPLPPPPFA). The Ephrin RBD domain occupies 34-174 (SDRYAVYWNR…RLKVYVRPTN (141 aa)). Asn42 carries N-linked (GlcNAc...) asparagine glycosylation. 2 disulfides stabilise this stretch: Cys73-Cys114 and Cys102-Cys163. N-linked (GlcNAc...) asparagine glycosylation is found at Asn174 and Asn188. Asn188 is lipidated: GPI-anchor amidated asparagine. Residues 189-213 (NSCSSPGGCRLFLSTIPVLWTLLGS) constitute a propeptide, removed in mature form.

It belongs to the ephrin family. Binds to the receptor tyrosine kinases EPHA3, EPHA4 and EPHA5. Interacts with EPHA8; activates EPHA8.

The protein localises to the cell membrane. Its function is as follows. Cell surface GPI-bound ligand for Eph receptors, a family of receptor tyrosine kinases which are crucial for migration, repulsion and adhesion during neuronal, vascular and epithelial development. Binds promiscuously Eph receptors residing on adjacent cells, leading to contact-dependent bidirectional signaling into neighboring cells. The signaling pathway downstream of the receptor is referred to as forward signaling while the signaling pathway downstream of the ephrin ligand is referred to as reverse signaling. With the EPHA2 receptor may play a role in bone remodeling through regulation of osteoclastogenesis and osteoblastogenesis. The polypeptide is Ephrin-A2 (EFNA2) (Homo sapiens (Human)).